The primary structure comprises 156 residues: MNLNATLIAQFVVFFILAGFTMKFVWPPLMNALDERAKKIADGLAAAERGKSDLAAAEKRAQAELTSAQEAGQKRIGDAEKRGQSIIDEAKKTAAEEAARIIATAKADADQQVTQVREALRDQVATLAVKGAEQILKREVNAAVHADLLNQLKAEL.

The chain crosses the membrane as a helical span at residues 7 to 27 (LIAQFVVFFILAGFTMKFVWP).

The protein belongs to the ATPase B chain family. As to quaternary structure, F-type ATPases have 2 components, F(1) - the catalytic core - and F(0) - the membrane proton channel. F(1) has five subunits: alpha(3), beta(3), gamma(1), delta(1), epsilon(1). F(0) has three main subunits: a(1), b(2) and c(10-14). The alpha and beta chains form an alternating ring which encloses part of the gamma chain. F(1) is attached to F(0) by a central stalk formed by the gamma and epsilon chains, while a peripheral stalk is formed by the delta and b chains.

It localises to the cell inner membrane. Functionally, f(1)F(0) ATP synthase produces ATP from ADP in the presence of a proton or sodium gradient. F-type ATPases consist of two structural domains, F(1) containing the extramembraneous catalytic core and F(0) containing the membrane proton channel, linked together by a central stalk and a peripheral stalk. During catalysis, ATP synthesis in the catalytic domain of F(1) is coupled via a rotary mechanism of the central stalk subunits to proton translocation. In terms of biological role, component of the F(0) channel, it forms part of the peripheral stalk, linking F(1) to F(0). The polypeptide is ATP synthase subunit b (Herminiimonas arsenicoxydans).